The sequence spans 151 residues: MHAKTKKLGTDTSYKRPQVTAQEQLSPEQIAEKLEGYMQINNISEVPLDTHIRYFSIQNDGTKLFRLGGFLRNKINADKYVVLSNGKNSWTVQVKNSVFFKKMNHEEEIESIHQHYKQQLQEKDKIIFKLKNKLQLLSNQTIPLGSKNKKI.

The disordered stretch occupies residues 1-24 (MHAKTKKLGTDTSYKRPQVTAQEQ).

This is an uncharacterized protein from Acanthamoeba polyphaga mimivirus (APMV).